A 473-amino-acid polypeptide reads, in one-letter code: Cysteine--tRNA ligase (473 aa).

Residue cysteine 28 participates in Zn(2+) binding. The short motif at 30–40 (MTVYDYCHLGH) is the 'HIGH' region element. Zn(2+) is bound by residues cysteine 209, histidine 234, and glutamate 238. The 'KMSKS' region signature appears at 282–286 (KMSKS). Lysine 285 contacts ATP.

Belongs to the class-I aminoacyl-tRNA synthetase family. In terms of assembly, monomer. Zn(2+) serves as cofactor.

The protein localises to the cytoplasm. It catalyses the reaction tRNA(Cys) + L-cysteine + ATP = L-cysteinyl-tRNA(Cys) + AMP + diphosphate. In Neisseria gonorrhoeae (strain ATCC 700825 / FA 1090), this protein is Cysteine--tRNA ligase.